The primary structure comprises 468 residues: Probable acid phosphatase DIA3 (468 aa).

Residues 1-20 (MVKPVIFAICLGVLLSKALS) form the signal peptide. The Nucleophile role is filled by H76. N-linked (GlcNAc...) asparagine glycosylation is found at N98, N163, N193, N202, N238, N251, and N316. The active-site Proton donor is the D339. Residues N357, N391, N457, and N462 are each glycosylated (N-linked (GlcNAc...) asparagine).

Belongs to the histidine acid phosphatase family.

The enzyme catalyses a phosphate monoester + H2O = an alcohol + phosphate. The sequence is that of Probable acid phosphatase DIA3 (DIA3) from Saccharomyces cerevisiae (strain ATCC 204508 / S288c) (Baker's yeast).